We begin with the raw amino-acid sequence, 607 residues long: ATP-dependent zinc metalloprotease FtsH 2 (607 aa).

Over Met1–Arg2 the chain is Cytoplasmic. A helical transmembrane segment spans residues Ser3 to Ala23. Topologically, residues Ser24–Gly99 are periplasmic. A helical transmembrane segment spans residues Leu100–Ala120. Topologically, residues Ser121 to Ala607 are cytoplasmic. Gly195–Thr202 provides a ligand contact to ATP. His418 lines the Zn(2+) pocket. Glu419 is an active-site residue. Residues His422 and Asp495 each coordinate Zn(2+).

This sequence in the central section; belongs to the AAA ATPase family. It in the C-terminal section; belongs to the peptidase M41 family. As to quaternary structure, homohexamer. The cofactor is Zn(2+).

It localises to the cell inner membrane. Its function is as follows. Acts as a processive, ATP-dependent zinc metallopeptidase for both cytoplasmic and membrane proteins. Plays a role in the quality control of integral membrane proteins. This chain is ATP-dependent zinc metalloprotease FtsH 2, found in Sorangium cellulosum (strain So ce56) (Polyangium cellulosum (strain So ce56)).